A 400-amino-acid chain; its full sequence is Enoyl-[acyl-carrier-protein] reductase [NADH] 1 (400 aa).

NAD(+) is bound by residues 48 to 53 (GASSGY), 74 to 75 (FE), 111 to 112 (DA), and 139 to 140 (LA). A substrate-binding site is contributed by Y225. Residue Y235 is the Proton donor of the active site. Residues K244 and 273-275 (VVT) contribute to the NAD(+) site.

Belongs to the TER reductase family. Monomer.

The enzyme catalyses a 2,3-saturated acyl-[ACP] + NAD(+) = a (2E)-enoyl-[ACP] + NADH + H(+). The protein operates within lipid metabolism; fatty acid biosynthesis. Its function is as follows. Involved in the final reduction of the elongation cycle of fatty acid synthesis (FAS II). Catalyzes the reduction of a carbon-carbon double bond in an enoyl moiety that is covalently linked to an acyl carrier protein (ACP). In Vibrio parahaemolyticus serotype O3:K6 (strain RIMD 2210633), this protein is Enoyl-[acyl-carrier-protein] reductase [NADH] 1.